We begin with the raw amino-acid sequence, 341 residues long: Phosphate acyltransferase (341 aa).

Belongs to the PlsX family. As to quaternary structure, homodimer. Probably interacts with PlsY.

It is found in the cytoplasm. The enzyme catalyses a fatty acyl-[ACP] + phosphate = an acyl phosphate + holo-[ACP]. The protein operates within lipid metabolism; phospholipid metabolism. In terms of biological role, catalyzes the reversible formation of acyl-phosphate (acyl-PO(4)) from acyl-[acyl-carrier-protein] (acyl-ACP). This enzyme utilizes acyl-ACP as fatty acyl donor, but not acyl-CoA. The protein is Phosphate acyltransferase of Saccharophagus degradans (strain 2-40 / ATCC 43961 / DSM 17024).